Reading from the N-terminus, the 211-residue chain is Urease accessory protein UreG (211 aa).

11–18 (GPVGAGKT) lines the GTP pocket.

This sequence belongs to the SIMIBI class G3E GTPase family. UreG subfamily. Homodimer. UreD, UreF and UreG form a complex that acts as a GTP-hydrolysis-dependent molecular chaperone, activating the urease apoprotein by helping to assemble the nickel containing metallocenter of UreC. The UreE protein probably delivers the nickel.

The protein localises to the cytoplasm. Functionally, facilitates the functional incorporation of the urease nickel metallocenter. This process requires GTP hydrolysis, probably effectuated by UreG. This chain is Urease accessory protein UreG, found in Actinobacillus pleuropneumoniae serotype 7 (strain AP76).